A 329-amino-acid polypeptide reads, in one-letter code: Probable ABC transporter permease protein MG188 (329 aa).

6 helical membrane-spanning segments follow: residues 30–50, 96–116, 128–148, 176–196, 234–254, and 283–303; these read FLLF…PFFL, LISL…IVFV, VFFL…VYIF, ALWA…VLII, LIFL…LALF, and NLAG…GLVL. Positions 88 to 303 constitute an ABC transmembrane type-1 domain; that stretch reads LRNSFLYSLI…VLGVCYGLVL (216 aa).

Belongs to the binding-protein-dependent transport system permease family. MalFG subfamily.

Its subcellular location is the cell membrane. In terms of biological role, probably part of a binding-protein-dependent transport system. Probably responsible for the translocation of the substrate across the membrane. This Mycoplasma genitalium (strain ATCC 33530 / DSM 19775 / NCTC 10195 / G37) (Mycoplasmoides genitalium) protein is Probable ABC transporter permease protein MG188.